Here is a 179-residue protein sequence, read N- to C-terminus: Large ribosomal subunit protein uL6c (179 aa).

Belongs to the universal ribosomal protein uL6 family. Part of the 50S ribosomal subunit.

It localises to the plastid. It is found in the cyanelle. In terms of biological role, binds 23S rRNA. The polypeptide is Large ribosomal subunit protein uL6c (rpl6) (Cyanophora paradoxa).